The primary structure comprises 620 residues: Translation initiation factor IF-2 (620 aa).

One can recognise a tr-type G domain in the interval 119 to 288 (ERPPIVTIMG…IILISELENL (170 aa)). The interval 128–135 (GHVDHGKT) is G1. 128 to 135 (GHVDHGKT) is a binding site for GTP. Residues 153–157 (GITQA) are G2. The tract at residues 175-178 (DTPG) is G3. Residues 175 to 179 (DTPGH) and 229 to 232 (NKID) contribute to the GTP site. The G4 stretch occupies residues 229–232 (NKID). The segment at 265–267 (SAI) is G5.

The protein belongs to the TRAFAC class translation factor GTPase superfamily. Classic translation factor GTPase family. IF-2 subfamily.

The protein resides in the cytoplasm. Its function is as follows. One of the essential components for the initiation of protein synthesis. Protects formylmethionyl-tRNA from spontaneous hydrolysis and promotes its binding to the 30S ribosomal subunits. Also involved in the hydrolysis of GTP during the formation of the 70S ribosomal complex. This is Translation initiation factor IF-2 from Mycoplasma mycoides subsp. mycoides SC (strain CCUG 32753 / NCTC 10114 / PG1).